A 342-amino-acid chain; its full sequence is 29 kDa ribonucleoprotein, chloroplastic (342 aa).

Residues 1-65 constitute a chloroplast transit peptide; sequence MSASASSLSA…PAEYPSRFVR (65 aa). Positions 99–177 constitute an RRM 1 domain; it reads LKLFVGNLSF…RPLRVNAGPP (79 aa). Phosphoserine occurs at positions 107 and 204. The tract at residues 167–255 is disordered; it reads GRPLRVNAGP…GSGSGSGSGS (89 aa). A linker (Gly-rich) region spans residues 178–256; sequence PPKREESFSR…SGSGSGSGSG (79 aa). Composition is skewed to gly residues over residues 190–237 and 245–255; these read RSGG…GYGG and SGSGSGSGSGS. The region spanning 257 to 335 is the RRM 2 domain; that stretch reads NRLYVGNLSW…RQIRVSEAEA (79 aa).

Its subcellular location is the plastid. The protein localises to the chloroplast. Stabilizes specific chloroplast mRNAs. Required for normal chloroplast development under cold stress conditions by stabilizing transcripts of numerous mRNAs under these conditions. The sequence is that of 29 kDa ribonucleoprotein, chloroplastic from Arabidopsis thaliana (Mouse-ear cress).